We begin with the raw amino-acid sequence, 132 residues long: Agouti-signaling protein (132 aa).

An N-terminal signal peptide occupies residues Met1–Ser22. Residue Asn39 is glycosylated (N-linked (GlcNAc...) asparagine). The disordered stretch occupies residues Gln61–Thr87. Basic and acidic residues predominate over residues Ser63 to Met79. Disulfide bonds link Cys93/Cys108, Cys100/Cys114, Cys107/Cys125, Cys111/Cys132, and Cys116/Cys123. The Agouti domain maps to Cys93 to Cys132.

The protein resides in the secreted. In terms of biological role, involved in the regulation of melanogenesis. The binding of ASP to MC1R precludes alpha-MSH initiated signaling and thus blocks production of cAMP, leading to a down-regulation of eumelanogenesis (brown/black pigment) and thus increasing synthesis of pheomelanin (yellow/red pigment). In Macaca silenus (Lion-tailed macaque), this protein is Agouti-signaling protein (ASIP).